A 241-amino-acid chain; its full sequence is Small ribosomal subunit protein eS4 (241 aa).

Residues 43 to 105 form the S4 RNA-binding domain; that stretch reads IPLVMVLRDI…INKTFRVLQD (63 aa).

The protein belongs to the eukaryotic ribosomal protein eS4 family.

The polypeptide is Small ribosomal subunit protein eS4 (Methanosphaera stadtmanae (strain ATCC 43021 / DSM 3091 / JCM 11832 / MCB-3)).